The chain runs to 615 residues: MTALAAVPDLQDAAGPSTTTVHSPNYSGSPADISSSPTTRAVSRNTARQTASAPPNHAESSPPGNASPTGPPSPSGNNVSPHGRHQGMSKLRACLVIATLSGVSFLNTMGSGILTVSLPTMARDVRLDDSLLLWPASVYSLAAGCTLLVFGAVGHIIGPKRVWITGACLYAAFTLGVGRSATGSQLIAFRSVLGVSIAMCLPTAVSLTTNGFGAGRWRNMAFAFQGMGQPLGYSTGLILGGIFTDTVGWRFGFYISGGINAVLAICALVVLPSPPRHDEGDGEQREVEEEATDATVAAAAVNRSSRSRPLISRLAHDVDWTGTLAISASMGFLSYVFSVVSKDYDRMAAPQNIALLVAAALLLPTFTLWVGRQERLDRPALIPNSLWRKAAFSSTCAAVFFTWAVFNAFQYFSALYFERIEHITALQTSLRFLPMVLVGAATNIVTGYLVETVEVRWLVVVSAIFSLFSPLIMALVRPGWGYWKGAFFAMLLSPLHPDVLFTVSNLIISRVYDGRSQSLAGAVFNAVSQVGNSVGLGLTAVVSSAVARSYHGSGGVGNAMDPPTGRPQHLPSSPTVEATLAGYHAAFWLMFGAAALVTVITFLGLRRGGKVGAVE.

Residues 1 to 85 are disordered; that stretch reads MTALAAVPDL…GNNVSPHGRH (85 aa). Residues 16–53 are compositionally biased toward polar residues; it reads PSTTTVHSPNYSGSPADISSSPTTRAVSRNTARQTASA. An N-linked (GlcNAc...) asparagine glycan is attached at N25. A run of 6 helical transmembrane segments spans residues 94 to 114, 138 to 158, 162 to 182, 192 to 212, 222 to 242, and 251 to 271; these read CLVIATLSGVSFLNTMGSGIL, VYSLAAGCTLLVFGAVGHIIG, VWITGACLYAAFTLGVGRSAT, VLGVSIAMCLPTAVSLTTNGF, FAFQGMGQPLGYSTGLILGGI, and FGFYISGGINAVLAICALVVL. N-linked (GlcNAc...) asparagine glycosylation is present at N302. Transmembrane regions (helical) follow at residues 320 to 340, 351 to 371, 397 to 417, 432 to 452, 455 to 475, 488 to 508, 522 to 542, and 585 to 605; these read WTGTLAISASMGFLSYVFSVV, QNIALLVAAALLLPTFTLWVG, AAVFFTWAVFNAFQYFSALYF, FLPMVLVGAATNIVTGYLVET, VRWLVVVSAIFSLFSPLIMAL, FAMLLSPLHPDVLFTVSNLII, AVFNAVSQVGNSVGLGLTAVV, and AAFWLMFGAAALVTVITFLGL.

Belongs to the major facilitator superfamily. EmrB family.

It is found in the membrane. Functionally, MFS-type transporter; part of the gene cluster that mediates the biosynthesis of pyriculol and pyriculariol, two heptaketides that induce lesion formation upon application on rice leaves but are dispensable for pathogenicity. With the ABC transporter ABC7, is most likely responsible for pyriculol and pyriculariol secretion and thereby may contribute to intrinsic resistance. The polypeptide is MFS-type transporter 1 (Pyricularia oryzae (strain 70-15 / ATCC MYA-4617 / FGSC 8958) (Rice blast fungus)).